The sequence spans 344 residues: MATELSALPANHPRVTFGKVGVLLVNLGTPDGTDYWPMRRYLAEFLSDKRVIEWSRLYWYPILYGIVLNKRPQKVGKAYEEIWNHERNESYLRTYTRSQGELMAAALKDFPNVVVDWAMRYGQPSIASRIDALKEQGCEKILLFPLYPQYAASTTATVNDKAFEHLMKLRWQPAIRTVPPYHDDPAYIEGLAASVKNHLATLDWEPEMLITSFHGIPQSYFKKGDPYYCHCQKTARLLREALGRTEKNFMITFQSRFGPEEWLQPYTDKTVEKLASEGIKRIAVMNPGFVSDCLETLEEIAGEAGEIFLHNGGEKFTHIPCLNDSTEGMNVLEKVVRRELQGWV.

Residues H214 and E295 each coordinate Fe cation.

Belongs to the ferrochelatase family.

It is found in the cytoplasm. It catalyses the reaction heme b + 2 H(+) = protoporphyrin IX + Fe(2+). The protein operates within porphyrin-containing compound metabolism; protoheme biosynthesis; protoheme from protoporphyrin-IX: step 1/1. Its function is as follows. Catalyzes the ferrous insertion into protoporphyrin IX. The polypeptide is Ferrochelatase (Agrobacterium fabrum (strain C58 / ATCC 33970) (Agrobacterium tumefaciens (strain C58))).